The sequence spans 469 residues: Glutamate--tRNA ligase (469 aa).

Positions 9 to 19 (PSPTGFLHVGG) match the 'HIGH' region motif. Zn(2+) contacts are provided by Cys98, Cys100, Cys125, and Asp127. Positions 236 to 240 (KLSKR) match the 'KMSKS' region motif. Residue Lys239 participates in ATP binding.

This sequence belongs to the class-I aminoacyl-tRNA synthetase family. Glutamate--tRNA ligase type 1 subfamily. As to quaternary structure, monomer. Zn(2+) is required as a cofactor.

The protein resides in the cytoplasm. It carries out the reaction tRNA(Glu) + L-glutamate + ATP = L-glutamyl-tRNA(Glu) + AMP + diphosphate. Catalyzes the attachment of glutamate to tRNA(Glu) in a two-step reaction: glutamate is first activated by ATP to form Glu-AMP and then transferred to the acceptor end of tRNA(Glu). The polypeptide is Glutamate--tRNA ligase (Shewanella sp. (strain MR-4)).